Consider the following 2128-residue polypeptide: Spectrin beta chain, erythrocytic (2128 aa).

Polar residues predominate over residues 1–15 (MTSATEFENVGNQPP). Positions 1–30 (MTSATEFENVGNQPPFSRINARWDAPDDEL) are disordered. The interval 2–275 (TSATEFENVG…IITYVVAFYH (274 aa)) is actin-binding. Serine 36 carries the post-translational modification Phosphoserine. 2 consecutive Calponin-homology (CH) domains span residues 54-158 (VVQK…LRFQ) and 173-278 (RSAK…HYFS). Phosphothreonine is present on threonine 104. Spectrin repeat units follow at residues 303 to 411 (MIEK…LALR), 416 to 517 (RQEF…QRLE), 521 to 627 (ALQK…QLEQ), 630 to 733 (RLWK…DLQD), 736 to 838 (NFFQ…KLQE), 845 to 942 (VFGE…REAV), 950 to 1050 (NYCV…LSLG), 1054 to 1157 (KLQA…NTLT), 1162 to 1250 (FQEF…RHKK), 1267 to 1368 (ELQN…EQLS), 1381 to 1455 (ADLN…FLDL), 1473 to 1574 (LQIS…RLRD), 1576 to 1680 (HEAQ…RLEN), 1682 to 1784 (YHLF…MQLL), 1789 to 1890 (DLHR…RAQL), 1897 to 1997 (FRFF…DRLH), and 2004 to 2064 (QFSR…KPTT). Position 1289 is a phosphoserine (serine 1289). Serine 2034 is modified (phosphoserine). The disordered stretch occupies residues 2062-2108 (PTTLELKERQTPERPTEEPGPQEEEGETAGEAPQVHHAATERTSPVS). Residues threonine 2064, threonine 2072, and threonine 2101 each carry the phosphothreonine modification. A compositionally biased stretch (basic and acidic residues) spans 2066–2078 (ELKERQTPERPTE). Residues serine 2105, serine 2108, serine 2114, serine 2116, and serine 2119 each carry the phosphoserine modification.

It belongs to the spectrin family. In terms of assembly, composed of nonhomologous chains, alpha and beta, which aggregate to form dimers, tetramers, and higher polymers. Interacts with BCAM.

It is found in the cytoplasm. Its subcellular location is the cytoskeleton. The protein resides in the cell cortex. Its function is as follows. Spectrin is the major constituent of the cytoskeletal network underlying the erythrocyte plasma membrane. It associates with band 4.1 and actin to form the cytoskeletal superstructure of the erythrocyte plasma membrane. This chain is Spectrin beta chain, erythrocytic (Sptb), found in Mus musculus (Mouse).